A 604-amino-acid polypeptide reads, in one-letter code: Lipid-A-disaccharide synthase (604 aa).

A unknown region spans residues 1–220 (MIPSGLVYLL…YKEQRSTPYL (220 aa)). The segment at 221 to 604 (DTHCFLSAGE…KRIFDTLPAV (384 aa)) is lipid-A-disaccharide synthase.

In the C-terminal section; belongs to the LpxB family.

It carries out the reaction a lipid X + a UDP-2-N,3-O-bis[(3R)-3-hydroxyacyl]-alpha-D-glucosamine = a lipid A disaccharide + UDP + H(+). It participates in bacterial outer membrane biogenesis; LPS lipid A biosynthesis. In terms of biological role, condensation of UDP-2,3-diacylglucosamine and 2,3-diacylglucosamine-1-phosphate to form lipid A disaccharide, a precursor of lipid A, a phosphorylated glycolipid that anchors the lipopolysaccharide to the outer membrane of the cell. The protein is Lipid-A-disaccharide synthase (lpxB) of Chlamydia pneumoniae (Chlamydophila pneumoniae).